The sequence spans 241 residues: Uridylate kinase (241 aa).

K15 to G18 is a binding site for ATP. The tract at residues G23 to G28 is involved in allosteric activation by GTP. G57 is a binding site for UMP. Residues G58 and R62 each contribute to the ATP site. UMP contacts are provided by residues D77 and T138 to T145. Positions 165, 171, and 174 each coordinate ATP.

This sequence belongs to the UMP kinase family. Homohexamer.

It localises to the cytoplasm. The enzyme catalyses UMP + ATP = UDP + ADP. The protein operates within pyrimidine metabolism; CTP biosynthesis via de novo pathway; UDP from UMP (UMPK route): step 1/1. Its activity is regulated as follows. Allosterically activated by GTP. Inhibited by UTP. In terms of biological role, catalyzes the reversible phosphorylation of UMP to UDP. The protein is Uridylate kinase of Klebsiella pneumoniae subsp. pneumoniae (strain ATCC 700721 / MGH 78578).